A 123-amino-acid polypeptide reads, in one-letter code: Large ribosomal subunit protein uL29 (123 aa).

Position 19 is an N6-acetyllysine (Lys19). Lys25 participates in a covalent cross-link: Glycyl lysine isopeptide (Lys-Gly) (interchain with G-Cter in SUMO2). Residue Ser29 is modified to Phosphoserine. Position 43 is an N6-acetyllysine (Lys43). The tract at residues 95-114 is disordered; it reads LNKHEENLKTKKQQRKERLY.

It belongs to the universal ribosomal protein uL29 family. Component of the large ribosomal subunit.

It is found in the cytoplasm. Functionally, component of the large ribosomal subunit. The ribosome is a large ribonucleoprotein complex responsible for the synthesis of proteins in the cell. The polypeptide is Large ribosomal subunit protein uL29 (RPL35) (Bos taurus (Bovine)).